We begin with the raw amino-acid sequence, 550 residues long: Cell pattern formation-associated protein STUA (550 aa).

One can recognise an HTH APSES-type domain in the interval 86–192 (RVTATLWEDE…HNIGALLYHP (107 aa)). Residues 120 to 141 (GTKLLNVAGMTRGRRDGILKSE) constitute a DNA-binding region (H-T-H motif). Polar residues predominate over residues 246–266 (SLANGPQSLASTPQPLTNGSQ). 4 disordered regions span residues 246 to 277 (SLAN…GMLK), 371 to 412 (HHQP…VKRR), 447 to 467 (KRRD…DHLN), and 527 to 550 (APVY…QSFG). A compositionally biased stretch (basic and acidic residues) spans 385-395 (RGRDEDDDVHR). Residues 517–546 (TVAASPSYPSAPVYDTGARPPSAISAPRRQ) form a nuclear localization domain region.

It belongs to the EFG1/PHD1/stuA family.

The protein localises to the nucleus. Functionally, transcription factor that regulates asexual reproduction. Binds the StuA-response elements (StRE) with the consensus sequence 5'-(A/T)CGCG(T/A)N(A/C)-3' at the promoters of target genes. Differentially regulates the development of macroconidia, microconidia, and chlamydospores. Acts as a positive regulator for the development of macroconidia and as a negative regulator for the development of chlamydospores. Involved in microconidium formation specifically in infected plants. This Fusarium oxysporum (Fusarium vascular wilt) protein is Cell pattern formation-associated protein STUA.